The chain runs to 277 residues: Putative thiosulfate sulfurtransferase (277 aa).

2 Rhodanese domains span residues 18-125 (KAPK…PLSA) and 154-274 (AIGT…APIE). K67 participates in a covalent cross-link: Isoglutamyl lysine isopeptide (Lys-Gln) (interchain with Q-Cter in protein Pup). Catalysis depends on C233, which acts as the Cysteine persulfide intermediate. R238 contacts substrate.

The catalysed reaction is thiosulfate + hydrogen cyanide = thiocyanate + sulfite + 2 H(+). May be a sulfotransferase involved in the formation of thiosulfate. This chain is Putative thiosulfate sulfurtransferase, found in Mycolicibacterium smegmatis (strain ATCC 700084 / mc(2)155) (Mycobacterium smegmatis).